Consider the following 230-residue polypeptide: Inactive L-threonine 3-dehydrogenase, mitochondrial (230 aa).

This sequence belongs to the NAD(P)-dependent epimerase/dehydratase family. Expressed in all tissues examined. Detected in most cell types examined, but not observed in endothelial cells, glioma cell lines and some leukemia cell lines.

The protein resides in the mitochondrion. In Homo sapiens (Human), this protein is Inactive L-threonine 3-dehydrogenase, mitochondrial.